A 142-amino-acid polypeptide reads, in one-letter code: Hemoglobin subunit alpha-B (142 aa).

The region spanning 2–142 (VLSPTDKSNV…VSTVLTSKYR (141 aa)) is the Globin domain. His-59 is an O2 binding site. His-88 provides a ligand contact to heme b.

This sequence belongs to the globin family. In terms of assembly, heterotetramer of two alpha chains and two beta chains. In terms of tissue distribution, red blood cells.

In terms of biological role, involved in oxygen transport from the lung to the various peripheral tissues. The chain is Hemoglobin subunit alpha-B (HBAB) from Otolemur crassicaudatus (Brown greater galago).